The primary structure comprises 81 residues: Putative defensin-like protein 188 (81 aa).

Residues 1–19 (MKNSSLLFILIVVFVISSS) form the signal peptide. Cystine bridges form between Cys-31–Cys-81, Cys-37–Cys-57, Cys-43–Cys-75, and Cys-47–Cys-77.

The protein belongs to the DEFL family.

It localises to the secreted. This is Putative defensin-like protein 188 (LCR41) from Arabidopsis thaliana (Mouse-ear cress).